The sequence spans 370 residues: Aminomethyltransferase (370 aa).

Belongs to the GcvT family. The glycine cleavage system is composed of four proteins: P, T, L and H.

The enzyme catalyses N(6)-[(R)-S(8)-aminomethyldihydrolipoyl]-L-lysyl-[protein] + (6S)-5,6,7,8-tetrahydrofolate = N(6)-[(R)-dihydrolipoyl]-L-lysyl-[protein] + (6R)-5,10-methylene-5,6,7,8-tetrahydrofolate + NH4(+). In terms of biological role, the glycine cleavage system catalyzes the degradation of glycine. The chain is Aminomethyltransferase from Clostridium botulinum (strain Loch Maree / Type A3).